Reading from the N-terminus, the 212-residue chain is Interleukin-6 (212 aa).

Positions 1–29 (MNSFSTSAFGPVAFSLGLLLVLPAAFPAP) are cleaved as a signal peptide. Cys72 and Cys78 are joined by a disulfide. Residue Asn73 is glycosylated (N-linked (GlcNAc...) asparagine). At Ser81 the chain carries Phosphoserine; by FAM20C. Residues Cys101 and Cys111 are joined by a disulfide bond.

It belongs to the IL-6 superfamily. Component of a hexamer of two molecules each of IL6, IL6R and IL6ST; first binds to IL6R to associate with the signaling subunit IL6ST. Interacts with IL6R (via the N-terminal ectodomain); this interaction may be affected by IL6R-binding with SORL1, hence decreasing IL6 cis signaling. Interacts with SORL1 (via the N-terminal ectodomain); this interaction leads to IL6 internalization and lysosomal degradation. May form a trimeric complex with the soluble SORL1 ectodomain and soluble IL6R receptor; this interaction might stabilize circulating IL6, hence promoting IL6 trans signaling. Post-translationally, N- and O-glycosylated. As to expression, produced by skeletal muscle.

The protein localises to the secreted. Cytokine with a wide variety of biological functions in immunity, tissue regeneration, and metabolism. Binds to IL6R, then the complex associates to the signaling subunit IL6ST/gp130 to trigger the intracellular IL6-signaling pathway. The interaction with the membrane-bound IL6R and IL6ST stimulates 'classic signaling', whereas the binding of IL6 and soluble IL6R to IL6ST stimulates 'trans-signaling'. Alternatively, 'cluster signaling' occurs when membrane-bound IL6:IL6R complexes on transmitter cells activate IL6ST receptors on neighboring receiver cells. Functionally, IL6 is a potent inducer of the acute phase response. Rapid production of IL6 contributes to host defense during infection and tissue injury, but excessive IL6 synthesis is involved in disease pathology. In the innate immune response, is synthesized by myeloid cells, such as macrophages and dendritic cells, upon recognition of pathogens through toll-like receptors (TLRs) at the site of infection or tissue injury. In the adaptive immune response, is required for the differentiation of B cells into immunoglobulin-secreting cells. Plays a major role in the differentiation of CD4(+) T cell subsets. Essential factor for the development of T follicular helper (Tfh) cells that are required for the induction of germinal-center formation. Required to drive naive CD4(+) T cells to the Th17 lineage. Also required for proliferation of myeloma cells and the survival of plasmablast cells. Its function is as follows. Acts as an essential factor in bone homeostasis and on vessels directly or indirectly by induction of VEGF, resulting in increased angiogenesis activity and vascular permeability. Induces, through 'trans-signaling' and synergistically with IL1B and TNF, the production of VEGF. Involved in metabolic controls, is discharged into the bloodstream after muscle contraction increasing lipolysis and improving insulin resistance. 'Trans-signaling' in central nervous system also regulates energy and glucose homeostasis. Mediates, through GLP-1, crosstalk between insulin-sensitive tissues, intestinal L cells and pancreatic islets to adapt to changes in insulin demand. Also acts as a myokine. Plays a protective role during liver injury, being required for maintenance of tissue regeneration. Also has a pivotal role in iron metabolism by regulating HAMP/hepcidin expression upon inflammation or bacterial infection. Through activation of IL6ST-YAP-NOTCH pathway, induces inflammation-induced epithelial regeneration. This chain is Interleukin-6, found in Homo sapiens (Human).